The chain runs to 151 residues: MKCPYCGSLDNKVIDSRLSRDDTETRRRRECLECARRFTTYEHVEKAPLMIVKKDGRREEFLKDKVRSGMMSACQKRRISINIIEDFISELEQDLMEMGEHEIPSSIIGEKVMKKLHALDDVAYVRFASVYREFKDVHDFYSELKSLLKKQ.

The segment at 3 to 34 (CPYCGSLDNKVIDSRLSRDDTETRRRRECLEC) is a zinc-finger region. One can recognise an ATP-cone domain in the interval 49 to 139 (LMIVKKDGRR…VYREFKDVHD (91 aa)).

It belongs to the NrdR family. Requires Zn(2+) as cofactor.

Negatively regulates transcription of bacterial ribonucleotide reductase nrd genes and operons by binding to NrdR-boxes. The protein is Transcriptional repressor NrdR of Desulfosudis oleivorans (strain DSM 6200 / JCM 39069 / Hxd3) (Desulfococcus oleovorans).